The chain runs to 291 residues: MAALQEKKTCGQRMEEFQRYCWNPDTGQMLGRTLSRWVWISLYYVAFYVVMTGLFALCLYVLMQTVDPYTPDYQDQLRSPGVTLRPDVYGEKGLEIVYNVSDNRTWADLTQTLHAFLAGYSPAAQEDSINCTSEQYFFQESFRAPNHTKFSCKFTADMLQNCSGLADPNFGFEEGKPCFIIKMNRIVKFLPSNGSAPRVDCAFLDQPRELGQPLQVKYYPPNGTFSLHYFPYYGKKAQPHYSNPLVAAKLLNIPRNAEVAIVCKVMAEHVTFNNPHDPYEGKVEFKLKIEK.

Residues 1–36 are Cytoplasmic-facing; that stretch reads MAALQEKKTCGQRMEEFQRYCWNPDTGQMLGRTLSR. The helical; Signal-anchor for type II membrane protein transmembrane segment at 37-57 threads the bilayer; that stretch reads WVWISLYYVAFYVVMTGLFAL. The Extracellular segment spans residues 58 to 291; that stretch reads CLYVLMQTVD…KVEFKLKIEK (234 aa). N-linked (GlcNAc...) asparagine glycosylation is found at N99, N103, N130, N146, and N161. A disulfide bond links C131 and C152. C162 and C178 form a disulfide bridge. 2 N-linked (GlcNAc...) asparagine glycosylation sites follow: N193 and N222. Residues 194 to 291 form an immunoglobulin-like region; that stretch reads GSAPRVDCAF…KVEFKLKIEK (98 aa). A disulfide bridge connects residues C201 and C263.

This sequence belongs to the X(+)/potassium ATPases subunit beta family. In terms of assembly, the ATPase pump is composed of two subunits: alpha (catalytic) and beta (regulatory). Interacts with alpha subunit ATP12A; this interaction is required for the formation of a functionally active pump and targeting at the plasma membrane. Interacts (via N-terminus) with alpha subunit ATP4A (via the P-domain). N-glycosylation is necessary for assembly and functional expression of the pump at the plasma membrane.

It localises to the apical cell membrane. The protein resides in the cell membrane. Functionally, the beta subunit of the gastric H(+)/K(+) ATPase pump which transports H(+) ions in exchange for K(+) ions across the apical membrane of parietal cells. Plays a structural and regulatory role in the assembly and membrane targeting of a functionally active pump. Within a transport cycle, the transfer of a H(+) ion across the membrane is coupled to ATP hydrolysis and is associated with a transient phosphorylation of the alpha subunit that shifts the pump conformation from inward-facing (E1) to outward-facing state (E2). Interacts with the phosphorylation domain of the alpha subunit and functions as a ratchet, stabilizing the lumenal-open E2 conformation and preventing the reverse reaction of the transport cycle. The polypeptide is Potassium-transporting ATPase subunit beta (Homo sapiens (Human)).